Reading from the N-terminus, the 305-residue chain is MLKQRTIKSIVKTVGIGLHSGRKVELTLRPAAPDTGIVFSRVDLPTPVDIPASALSIGDTRLASVLQKDGARVSTVEHLMSACAGLGIDNLYVDVTAEEIPIMDGSAASFVFLIQSAGIEEQNAAKKFIKVTKPVEIRDGDKFARLDPYFGFKLKFTIDFRHPAVDKTGQELEVDFANTSYVREIARARTFGFAHEVEMMRELGLARGGSMDNAIVLDEYRILNNDGLRYDDEFVKHKMLDAIGDLYVVGHPLLASYTAYKSGHGLNNALLRELLAHEDAYEIVTFDDPKAAPTGFGFDAQTAFA.

Histidine 78, histidine 237, and aspartate 241 together coordinate Zn(2+). The active-site Proton donor is the histidine 264.

Belongs to the LpxC family. Zn(2+) is required as a cofactor.

The enzyme catalyses a UDP-3-O-[(3R)-3-hydroxyacyl]-N-acetyl-alpha-D-glucosamine + H2O = a UDP-3-O-[(3R)-3-hydroxyacyl]-alpha-D-glucosamine + acetate. It functions in the pathway glycolipid biosynthesis; lipid IV(A) biosynthesis; lipid IV(A) from (3R)-3-hydroxytetradecanoyl-[acyl-carrier-protein] and UDP-N-acetyl-alpha-D-glucosamine: step 2/6. In terms of biological role, catalyzes the hydrolysis of UDP-3-O-myristoyl-N-acetylglucosamine to form UDP-3-O-myristoylglucosamine and acetate, the committed step in lipid A biosynthesis. This is UDP-3-O-acyl-N-acetylglucosamine deacetylase from Burkholderia thailandensis (strain ATCC 700388 / DSM 13276 / CCUG 48851 / CIP 106301 / E264).